Consider the following 78-residue polypeptide: Beta-defensin 105A (78 aa).

The N-terminal stretch at 1 to 27 (MALIKKTFFFLFAMFFILVQLSSGCQA) is a signal peptide. 3 disulfide bridges follow: Cys-43–Cys-74, Cys-53–Cys-67, and Cys-57–Cys-73.

The protein belongs to the beta-defensin family.

It localises to the secreted. Functionally, has antimicrobial activity. The chain is Beta-defensin 105A (DEFB105A) from Pan troglodytes (Chimpanzee).